Reading from the N-terminus, the 325-residue chain is Transaldolase (325 aa).

Lys-125 acts as the Schiff-base intermediate with substrate in catalysis.

The protein belongs to the transaldolase family. Type 2 subfamily.

It localises to the cytoplasm. It carries out the reaction D-sedoheptulose 7-phosphate + D-glyceraldehyde 3-phosphate = D-erythrose 4-phosphate + beta-D-fructose 6-phosphate. The protein operates within carbohydrate degradation; pentose phosphate pathway; D-glyceraldehyde 3-phosphate and beta-D-fructose 6-phosphate from D-ribose 5-phosphate and D-xylulose 5-phosphate (non-oxidative stage): step 2/3. Its function is as follows. Transaldolase is important for the balance of metabolites in the pentose-phosphate pathway. The sequence is that of Transaldolase from Campylobacter jejuni subsp. doylei (strain ATCC BAA-1458 / RM4099 / 269.97).